Here is a 361-residue protein sequence, read N- to C-terminus: MPADGIRARFRVDYAGFALDVDLTLPGHGVTALFGHSGSGKTTLLRCVAGLERAAEARLEINGELWQDSAAGVFLPTHRRALGYVFQEASLFPHLSVRRNLEYGMKRVDAASRQVSWERVLELLGIGHLLERLPGRLSGGERQRVGIARALLTSPRLLLMDEPLAALDLKRKNEILPYLERLHDELDIPMLFVSHLPDEVARLADHVVLLDQGRVTAQGSLQDIMARLDLPTAFHEDAGVVIESVVAEHDDHYHLTRLAFPGGAVLVARRPEAPGQRLRLRVHARDVSLANSRIEDSSITNVLPATVREVVEADTPAHVLVRLEAEGTPLIARITRRSCDQLGIAPGRRMWAQIKAVALLG.

The ABC transporter domain maps to 1 to 237; that stretch reads MPADGIRARF…LDLPTAFHED (237 aa). 35 to 42 provides a ligand contact to ATP; that stretch reads GHSGSGKT. The Mop domain maps to 296–361; it reads DSSITNVLPA…AQIKAVALLG (66 aa).

This sequence belongs to the ABC transporter superfamily. Molybdate importer (TC 3.A.1.8) family. In terms of assembly, the complex is composed of two ATP-binding proteins (ModC), two transmembrane proteins (ModB) and a solute-binding protein (ModA).

The protein localises to the cell inner membrane. The catalysed reaction is molybdate(out) + ATP + H2O = molybdate(in) + ADP + phosphate + H(+). Its function is as follows. Part of the ABC transporter complex ModABC involved in molybdenum import. Responsible for energy coupling to the transport system. This chain is Molybdenum import ATP-binding protein ModC 1, found in Azotobacter vinelandii.